The following is a 635-amino-acid chain: Threonine--tRNA ligase (635 aa).

The 61-residue stretch at M1 to T61 folds into the TGS domain. A catalytic region spans residues D242 to P533. Zn(2+) is bound by residues C333, H384, and H510.

It belongs to the class-II aminoacyl-tRNA synthetase family. Homodimer. Zn(2+) serves as cofactor.

Its subcellular location is the cytoplasm. The catalysed reaction is tRNA(Thr) + L-threonine + ATP = L-threonyl-tRNA(Thr) + AMP + diphosphate + H(+). Functionally, catalyzes the attachment of threonine to tRNA(Thr) in a two-step reaction: L-threonine is first activated by ATP to form Thr-AMP and then transferred to the acceptor end of tRNA(Thr). Also edits incorrectly charged L-seryl-tRNA(Thr). This chain is Threonine--tRNA ligase, found in Burkholderia lata (strain ATCC 17760 / DSM 23089 / LMG 22485 / NCIMB 9086 / R18194 / 383).